The following is a 223-amino-acid chain: MIQVRNLKKTFIKDGNRIEVLRGLDLKIEDGTSLAILGVSGAGKTTFVHILGTLDHPTSGEVLFNGLDVFNWPEKKLASFRNRTIGFVFQFHNLLPEFSSLENTMMPALISGMPRRNALERAETLLHDVGLGDRMTHKPSELSGGEQQRVAVARALVMEPEILLADEPTGNLDTETGRKIEDILLELNRQKGITLIVVTHNQSLAGRMSRSIGLRDGEIVTCA.

The 222-residue stretch at 2–223 (IQVRNLKKTF…LRDGEIVTCA (222 aa)) folds into the ABC transporter domain. 38-45 (GVSGAGKT) lines the ATP pocket.

Belongs to the ABC transporter superfamily. Lipoprotein translocase (TC 3.A.1.125) family. The complex is composed of two ATP-binding proteins (LolD) and two transmembrane proteins (LolC and LolE).

The protein localises to the cell inner membrane. Functionally, part of the ABC transporter complex LolCDE involved in the translocation of mature outer membrane-directed lipoproteins, from the inner membrane to the periplasmic chaperone, LolA. Responsible for the formation of the LolA-lipoprotein complex in an ATP-dependent manner. The polypeptide is Lipoprotein-releasing system ATP-binding protein LolD (Syntrophus aciditrophicus (strain SB)).